Here is a 492-residue protein sequence, read N- to C-terminus: Cytochrome P450 2A1 (492 aa).

Position 130 is a phosphoserine (serine 130). Cysteine 437 is a binding site for heme.

It belongs to the cytochrome P450 family. Requires heme as cofactor. Liver and testis.

The protein localises to the endoplasmic reticulum membrane. It localises to the microsome membrane. The catalysed reaction is an organic molecule + reduced [NADPH--hemoprotein reductase] + O2 = an alcohol + oxidized [NADPH--hemoprotein reductase] + H2O + H(+). In terms of biological role, highly active in the 7-alpha-hydroxylation of testosterone, progesterone and androstenedione. In Rattus norvegicus (Rat), this protein is Cytochrome P450 2A1 (Cyp2a1).